The chain runs to 610 residues: Propanediol dehydratase-reactivating factor large subunit (610 aa).

ATP is bound at residue 11-13; it reads NSS. Mg(2+) is bound by residues threonine 105, aspartate 166, and aspartate 183. Residues 459–462, 557–558, and arginine 591 contribute to the ATP site; these read EEIK and GS.

The protein belongs to the DdrA/PduG family. As to quaternary structure, forms a heterotetramer PduG(2)/PduH(2). Mg(2+) serves as cofactor.

It is found in the bacterial microcompartment. It carries out the reaction ATP + H2O = ADP + phosphate + H(+). It participates in polyol metabolism; 1,2-propanediol degradation. In terms of biological role, large subunit of the propanediol dehydratase-reactivating factor (DDR), which reactivates suicidally inhibited adenosylcobalamin-dependent propanediol dehydratase (diol dehydratase, DDH) found in the bacterial microcompartment (BMC) dedicated to 1,2-propanediol (1,2-PD) degradation. Reactivates inactivated DDH in the presence of ATP, Mg(2+) and free adenosylcobalamin (AdoCbl), by mediating the exchange of the tightly bound damaged cofactor AdoCbl for a free intact one. This subunit contains the adenosine nucleotide binding site. The 1,2-PD-specific bacterial microcompartment (BMC) concentrates low levels of 1,2-PD catabolic enzymes, concentrates volatile reaction intermediates thus enhancing pathway flux and keeps the level of toxic, mutagenic propionaldehyde low. The protein is Propanediol dehydratase-reactivating factor large subunit of Salmonella typhimurium (strain LT2 / SGSC1412 / ATCC 700720).